A 50-amino-acid polypeptide reads, in one-letter code: Small ribosomal subunit protein uS14 (50 aa).

4 residues coordinate Zn(2+): cysteine 15, cysteine 18, cysteine 33, and cysteine 36.

The protein belongs to the universal ribosomal protein uS14 family. Zinc-binding uS14 subfamily. In terms of assembly, part of the 30S ribosomal subunit. Zn(2+) is required as a cofactor.

Functionally, binds 16S rRNA, required for the assembly of 30S particles. The sequence is that of Small ribosomal subunit protein uS14 from Methanococcoides burtonii (strain DSM 6242 / NBRC 107633 / OCM 468 / ACE-M).